The sequence spans 380 residues: MTNLRKTHPLLKIANDALVDLPAPANISVWWNFGSLLGLCLITQIATGLFLAMHYTSDIATAFSSVAHICRDVNYGWLIRNLHANGASFFFICIYLHIGRGLYYGSYLYKETWNVGVILLLLVMMTAFVGYVLPWGQMSFWGATVITNLLSAVPYVGNSLVQWIWGGFSVDNATLTRFFAFHFLLPFIIAAATVIHLLFLHETGSNNPTGLNSDADKISFHPYFSYKDLLGFAALLIALTSLALFSPNLLGDPDNFTPANPLVTPPHIKPEWYFLFAYAILRSIPNKLGGVLALLFSILVLMLVPILHTSKQRGLTFRPITQFLFWTLVADVIILTWIGGMPVEHPFIIIGQIASFLYFFLFLVLTPLAGWLENKALEWS.

The next 4 helical transmembrane spans lie at 33–53 (FGSLLGLCLITQIATGLFLAM), 77–98 (WLIRNLHANGASFFFICIYLHI), 113–133 (WNVGVILLLLVMMTAFVGYVL), and 178–198 (FFAFHFLLPFIIAAATVIHLL). Heme b-binding residues include H83 and H97. Heme b contacts are provided by H182 and H196. H201 serves as a coordination point for a ubiquinone. Helical transmembrane passes span 226 to 246 (YKDLLGFAALLIALTSLALFS), 288 to 308 (LGGVLALLFSILVLMLVPILH), 320 to 340 (ITQFLFWTLVADVIILTWIGG), and 347 to 367 (FIIIGQIASFLYFFLFLVLTP).

This sequence belongs to the cytochrome b family. As to quaternary structure, the cytochrome bc1 complex contains 3 respiratory subunits (MT-CYB, CYC1 and UQCRFS1), 2 core proteins (UQCRC1 and UQCRC2) and probably 6 low-molecular weight proteins. The cofactor is heme b.

Its subcellular location is the mitochondrion inner membrane. Its function is as follows. Component of the ubiquinol-cytochrome c reductase complex (complex III or cytochrome b-c1 complex) that is part of the mitochondrial respiratory chain. The b-c1 complex mediates electron transfer from ubiquinol to cytochrome c. Contributes to the generation of a proton gradient across the mitochondrial membrane that is then used for ATP synthesis. The chain is Cytochrome b (mt-cyb) from Dactyloptena peterseni (Starry flying gurnard).